We begin with the raw amino-acid sequence, 273 residues long: MPELPEVETSLRGVEPYLHGKIIKQIVVRTQKLRWAVSDELQHMQGAKIVALSRRAKYLILHTTQGDILIHLGMSGSLGILQENQQPAGKHDHVDLITQDGMVLRYNDPRKFGCWLWTKNAEQHELITRLGPEPLSESFTAAYLFARSRNKTVAVKNFIMNNDIVVGVGNIYACESLFMAGLHPELAAQNLTEKQCERLVKVIKEVLAKAIIQGGTTLKDFIQPDGKPGYFAQVLQVYGRKGEACNDCGTIIEAKVIGQRNSYFCPHCQILPR.

The active-site Schiff-base intermediate with DNA is the P2. Catalysis depends on E3, which acts as the Proton donor. Residue K57 is the Proton donor; for beta-elimination activity of the active site. DNA contacts are provided by H91, R110, and K151. The segment at 236 to 270 adopts an FPG-type zinc-finger fold; sequence QVYGRKGEACNDCGTIIEAKVIGQRNSYFCPHCQI. R260 acts as the Proton donor; for delta-elimination activity in catalysis.

Belongs to the FPG family. As to quaternary structure, monomer. The cofactor is Zn(2+).

The enzyme catalyses Hydrolysis of DNA containing ring-opened 7-methylguanine residues, releasing 2,6-diamino-4-hydroxy-5-(N-methyl)formamidopyrimidine.. It carries out the reaction 2'-deoxyribonucleotide-(2'-deoxyribose 5'-phosphate)-2'-deoxyribonucleotide-DNA = a 3'-end 2'-deoxyribonucleotide-(2,3-dehydro-2,3-deoxyribose 5'-phosphate)-DNA + a 5'-end 5'-phospho-2'-deoxyribonucleoside-DNA + H(+). Its function is as follows. Involved in base excision repair of DNA damaged by oxidation or by mutagenic agents. Acts as a DNA glycosylase that recognizes and removes damaged bases. Has a preference for oxidized purines, such as 7,8-dihydro-8-oxoguanine (8-oxoG). Has AP (apurinic/apyrimidinic) lyase activity and introduces nicks in the DNA strand. Cleaves the DNA backbone by beta-delta elimination to generate a single-strand break at the site of the removed base with both 3'- and 5'-phosphates. The chain is Formamidopyrimidine-DNA glycosylase from Actinobacillus pleuropneumoniae serotype 7 (strain AP76).